A 1072-amino-acid chain; its full sequence is DNA-directed RNA polymerase subunit beta (1072 aa).

Belongs to the RNA polymerase beta chain family. As to quaternary structure, in plastids the minimal PEP RNA polymerase catalytic core is composed of four subunits: alpha, beta, beta', and beta''. When a (nuclear-encoded) sigma factor is associated with the core the holoenzyme is formed, which can initiate transcription.

The protein resides in the plastid. Its subcellular location is the chloroplast. It carries out the reaction RNA(n) + a ribonucleoside 5'-triphosphate = RNA(n+1) + diphosphate. Its function is as follows. DNA-dependent RNA polymerase catalyzes the transcription of DNA into RNA using the four ribonucleoside triphosphates as substrates. This chain is DNA-directed RNA polymerase subunit beta, found in Nasturtium officinale (Watercress).